Here is a 130-residue protein sequence, read N- to C-terminus: Small ribosomal subunit protein uS9 (130 aa).

Residues G102–R130 form a disordered region. Residues K111 to R130 are compositionally biased toward basic residues.

This sequence belongs to the universal ribosomal protein uS9 family.

The protein is Small ribosomal subunit protein uS9 of Finegoldia magna (strain ATCC 29328 / DSM 20472 / WAL 2508) (Peptostreptococcus magnus).